The primary structure comprises 506 residues: AMP phosphorylase (506 aa).

Residues glycine 167, 193–198 (SRAITG), and threonine 202 each bind AMP. The active-site Proton donor is aspartate 255. Positions 263 and 287 each coordinate AMP.

This sequence belongs to the thymidine/pyrimidine-nucleoside phosphorylase family. Type 2 subfamily.

It catalyses the reaction AMP + phosphate = alpha-D-ribose 1,5-bisphosphate + adenine. The enzyme catalyses CMP + phosphate = cytosine + alpha-D-ribose 1,5-bisphosphate. It carries out the reaction UMP + phosphate = alpha-D-ribose 1,5-bisphosphate + uracil. In terms of biological role, catalyzes the conversion of AMP and phosphate to adenine and ribose 1,5-bisphosphate (R15P). Exhibits phosphorylase activity toward CMP and UMP in addition to AMP. Functions in an archaeal AMP degradation pathway, together with R15P isomerase and RubisCO. The polypeptide is AMP phosphorylase (Methanosarcina acetivorans (strain ATCC 35395 / DSM 2834 / JCM 12185 / C2A)).